Here is a 226-residue protein sequence, read N- to C-terminus: Probable septum site-determining protein MinC (226 aa).

Belongs to the MinC family. As to quaternary structure, interacts with MinD and FtsZ.

Cell division inhibitor that blocks the formation of polar Z ring septums. Rapidly oscillates between the poles of the cell to destabilize FtsZ filaments that have formed before they mature into polar Z rings. Prevents FtsZ polymerization. The sequence is that of Probable septum site-determining protein MinC from Edwardsiella ictaluri (strain 93-146).